Consider the following 186-residue polypeptide: Lipid A acyltransferase PagP (186 aa).

Positions 1 to 25 are cleaved as a signal peptide; that stretch reads MNVSKYVAIFSFVFIQLISVGKVFA. Active-site residues include His-58, Asp-101, and Ser-102.

Belongs to the lipid A palmitoyltransferase family. As to quaternary structure, homodimer.

The protein localises to the cell outer membrane. It catalyses the reaction a lipid A + a 1,2-diacyl-sn-glycero-3-phosphocholine = a hepta-acyl lipid A + a 2-acyl-sn-glycero-3-phosphocholine. The enzyme catalyses a lipid IVA + a 1,2-diacyl-sn-glycero-3-phosphocholine = a lipid IVB + a 2-acyl-sn-glycero-3-phosphocholine. The catalysed reaction is a lipid IIA + a 1,2-diacyl-sn-glycero-3-phosphocholine = a lipid IIB + a 2-acyl-sn-glycero-3-phosphocholine. In terms of biological role, transfers a fatty acid residue from the sn-1 position of a phospholipid to the N-linked hydroxyfatty acid chain on the proximal unit of lipid A or its precursors. This chain is Lipid A acyltransferase PagP, found in Shigella boydii serotype 4 (strain Sb227).